Reading from the N-terminus, the 658-residue chain is Interferon-induced GTP-binding protein Mx1 (658 aa).

M1 carries the N-acetylmethionine modification. A disordered region spans residues M1–L20. The Dynamin-type G domain occupies D65 to P338. The interval G75 to S82 is G1 motif. G75–S82 contacts GTP. The tract at residues V100–R102 is G2 motif. A G3 motif region spans residues D176–G179. GTP contacts are provided by residues D176–I180 and T245–D248. A G4 motif region spans residues T245–D248. Residues K277–G280 are G5 motif. The bundle signaling element (BSE) stretch occupies residues L339 to E364. The middle domain stretch occupies residues E364–C531. Positions E365–E628 are stalk. Residues K551–K554 form a critical for lipid-binding region. One can recognise a GED domain in the interval L570–G658.

The protein belongs to the TRAFAC class dynamin-like GTPase superfamily. Dynamin/Fzo/YdjA family. In terms of assembly, homooligomer. Oligomerizes into multimeric filamentous or ring-like structures by virtue of its stalk domain. Oligomerization is critical for GTPase activity, protein stability, and recognition of viral target structures. Interacts with TRPC1, TRPC3, TRPC4, TRPC5, TRPC6 and TRPC7. Interacts with HSPA5. Interacts with TUBB/TUBB5. Interacts with DDX39A and DDX39B. ISGylated.

It localises to the cytoplasm. It is found in the endoplasmic reticulum membrane. The protein resides in the perinuclear region. Its function is as follows. Interferon-induced dynamin-like GTPase with antiviral activity. In Otaria byronia (South American sea lion), this protein is Interferon-induced GTP-binding protein Mx1 (MX1).